A 105-amino-acid chain; its full sequence is UPF0145 protein Sala_0338 (105 aa).

Belongs to the UPF0145 family.

This is UPF0145 protein Sala_0338 from Sphingopyxis alaskensis (strain DSM 13593 / LMG 18877 / RB2256) (Sphingomonas alaskensis).